A 115-amino-acid chain; its full sequence is T cell receptor beta variable 11-3 (115 aa).

Positions 1 to 21 (MGTRLLCWVAFCLLVEELIEA) are cleaved as a signal peptide. In terms of domain architecture, Ig-like spans 22–115 (GVVQSPRYKI…SAVYLCASSL (94 aa)). Cys42 and Cys111 form a disulfide bridge.

In terms of assembly, alpha-beta TR is a heterodimer composed of an alpha and beta chain; disulfide-linked. The alpha-beta TR is associated with the transmembrane signaling CD3 coreceptor proteins to form the TR-CD3 (TcR or TCR). The assembly of alpha-beta TR heterodimers with CD3 occurs in the endoplasmic reticulum where a single alpha-beta TR heterodimer associates with one CD3D-CD3E heterodimer, one CD3G-CD3E heterodimer and one CD247 homodimer forming a stable octameric structure. CD3D-CD3E and CD3G-CD3E heterodimers preferentially associate with TR alpha and TR beta chains, respectively. The association of the CD247 homodimer is the last step of TcR assembly in the endoplasmic reticulum and is required for transport to the cell surface.

The protein localises to the cell membrane. In terms of biological role, v region of the variable domain of T cell receptor (TR) beta chain that participates in the antigen recognition. Alpha-beta T cell receptors are antigen specific receptors which are essential to the immune response and are present on the cell surface of T lymphocytes. Recognize peptide-major histocompatibility (MH) (pMH) complexes that are displayed by antigen presenting cells (APC), a prerequisite for efficient T cell adaptive immunity against pathogens. Binding of alpha-beta TR to pMH complex initiates TR-CD3 clustering on the cell surface and intracellular activation of LCK that phosphorylates the ITAM motifs of CD3G, CD3D, CD3E and CD247 enabling the recruitment of ZAP70. In turn ZAP70 phosphorylates LAT, which recruits numerous signaling molecules to form the LAT signalosome. The LAT signalosome propagates signal branching to three major signaling pathways, the calcium, the mitogen-activated protein kinase (MAPK) kinase and the nuclear factor NF-kappa-B (NF-kB) pathways, leading to the mobilization of transcription factors that are critical for gene expression and essential for T cell growth and differentiation. The T cell repertoire is generated in the thymus, by V-(D)-J rearrangement. This repertoire is then shaped by intrathymic selection events to generate a peripheral T cell pool of self-MH restricted, non-autoaggressive T cells. Post-thymic interaction of alpha-beta TR with the pMH complexes shapes TR structural and functional avidity. The sequence is that of T cell receptor beta variable 11-3 from Homo sapiens (Human).